The following is a 375-amino-acid chain: Probable L-tyrosine/L-aspartate decarboxylase (375 aa).

At lysine 226 the chain carries N6-(pyridoxal phosphate)lysine.

Belongs to the group II decarboxylase family. MfnA subfamily. Requires pyridoxal 5'-phosphate as cofactor.

It catalyses the reaction L-tyrosine + H(+) = tyramine + CO2. The enzyme catalyses L-aspartate + H(+) = beta-alanine + CO2. It functions in the pathway cofactor biosynthesis; methanofuran biosynthesis. The protein operates within cofactor biosynthesis; coenzyme A biosynthesis. In terms of biological role, catalyzes the decarboxylation of L-tyrosine to produce tyramine for methanofuran biosynthesis. Can also catalyze the decarboxylation of L-aspartate to produce beta-alanine for coenzyme A (CoA) biosynthesis. The protein is Probable L-tyrosine/L-aspartate decarboxylase of Methanocella arvoryzae (strain DSM 22066 / NBRC 105507 / MRE50).